We begin with the raw amino-acid sequence, 912 residues long: Intercellular adhesion molecule 5 (912 aa).

The N-terminal stretch at 1–29 (MPGPSPGLRALLGFWVALGLGILRLSAVA) is a signal peptide. The Extracellular segment spans residues 30-826 (QEPFWADLQP…RITVRVAGPW (797 aa)). 9 Ig-like C2-type domains span residues 47–127 (GGSL…PLPP), 132–232 (GENF…RLLA), 239–324 (DSQS…LLTL), 332–395 (GKLV…NGSA), 403–481 (PRLD…VTLT), 486–561 (PALD…VAVT), 566–645 (PSFE…NPLG), 659–734 (PQMD…TVGV), and 738–819 (PVVA…RRIT). N-linked (GlcNAc...) (high mannose) asparagine glycosylation is present at asparagine 53. Disulfide bonds link cysteine 54/cysteine 97 and cysteine 58/cysteine 101. Residue asparagine 134 is glycosylated (N-linked (GlcNAc...) asparagine). Residues cysteine 139 and cysteine 195 are joined by a disulfide bond. 2 positions are modified to phosphothreonine: threonine 179 and threonine 181. Residues asparagine 192 and asparagine 211 are each glycosylated (N-linked (GlcNAc...) asparagine). A disulfide bridge links cysteine 246 with cysteine 297. Asparagine 311, asparagine 366, and asparagine 392 each carry an N-linked (GlcNAc...) asparagine glycan. Cysteine 339 and cysteine 378 form a disulfide bridge. 3 disulfide bridges follow: cysteine 410–cysteine 465, cysteine 493–cysteine 546, and cysteine 573–cysteine 638. 2 N-linked (GlcNAc...) asparagine glycosylation sites follow: asparagine 576 and asparagine 639. Cysteine 666 and cysteine 717 are oxidised to a cystine. Residues 678 to 708 (AAGPACARGRPSPRVRCSREGAPRPARPRVS) are disordered. N-linked (GlcNAc...) asparagine glycans are attached at residues asparagine 756, asparagine 787, and asparagine 788. Cysteines 761 and 806 form a disulfide. Residues 827 to 847 (LWIAVGGAVGGAVLLAAGAGL) form a helical membrane-spanning segment. The Cytoplasmic segment spans residues 848–912 (AFYVQSTACK…EVFAIQLTSA (65 aa)). The disordered stretch occupies residues 880 to 902 (GGAGSGAEGGPEAEDSAESPAGG).

This sequence belongs to the immunoglobulin superfamily. ICAM family. In terms of processing, glycosylation at Asn-53 is critical for functional folding. As to expression, expressed on neurons in the most rostral segment of the mammalian brain, the telencephalon.

It is found in the membrane. In terms of biological role, ICAM proteins are ligands for the leukocyte adhesion protein LFA-1 (integrin alpha-L/beta-2). The sequence is that of Intercellular adhesion molecule 5 (ICAM5) from Oryctolagus cuniculus (Rabbit).